The following is a 157-amino-acid chain: Protein Smg homolog (157 aa).

The protein belongs to the Smg family.

The protein is Protein Smg homolog of Shewanella pealeana (strain ATCC 700345 / ANG-SQ1).